Reading from the N-terminus, the 720-residue chain is Putative fatty acid oxidation complex trifunctional enzyme (720 aa).

The interval 1–384 (MQNEIKKVCV…SWHYGPFELL (384 aa)) is 3-hydroxyacyl-CoA dehydrogenase. Positions 453 to 720 (FVITTKMNSL…TIEKLQAIVG (268 aa)) are enoyl-CoA hydratase/isomerase.

The protein in the N-terminal section; belongs to the 3-hydroxyacyl-CoA dehydrogenase family. This sequence in the C-terminal section; belongs to the enoyl-CoA hydratase/isomerase family.

It catalyses the reaction a (3S)-3-hydroxyacyl-CoA + NAD(+) = a 3-oxoacyl-CoA + NADH + H(+). The enzyme catalyses a (3S)-3-hydroxyacyl-CoA = a (2E)-enoyl-CoA + H2O. It carries out the reaction a 4-saturated-(3S)-3-hydroxyacyl-CoA = a (3E)-enoyl-CoA + H2O. The catalysed reaction is a (3Z)-enoyl-CoA = a 4-saturated (2E)-enoyl-CoA. It catalyses the reaction a (3E)-enoyl-CoA = a 4-saturated (2E)-enoyl-CoA. The chain is Putative fatty acid oxidation complex trifunctional enzyme from Rickettsia prowazekii (strain Madrid E).